A 337-amino-acid polypeptide reads, in one-letter code: Equatorin (337 aa).

The first 20 residues, 1-20 (MDFILLIILSGVFLPDIISL), serve as a signal peptide directing secretion. Topologically, residues 21 to 183 (QPIVGQEPGV…LSELEEIKLK (163 aa)) are lumenal. The interval 110–130 (SKPTASGEEEKPSESSRKTST) is disordered. Positions 117 to 126 (EEEKPSESSR) are enriched in basic and acidic residues. Residue N145 is glycosylated (N-linked (GlcNAc...) asparagine). Residues 184-204 (LMLGISLMTLVLLIPLLIFCF) traverse the membrane as a helical segment. Topologically, residues 205-337 (ATLYKLRHLR…LLNKEGSPSN (133 aa)) are cytoplasmic. The segment at 259-283 (SSEMRRSRTRRSKSKPMDFSAGSNQ) is disordered. At S336 the chain carries Phosphoserine.

In terms of assembly, interacts with SNAP25. Post-translationally, highly N- and O-glycosylated; contains sialic acid. MN9 epitope is O-glycosylated. In terms of tissue distribution, sperm specific, including germ cells (at protein level).

It is found in the cytoplasmic vesicle. Its subcellular location is the secretory vesicle. The protein localises to the acrosome membrane. It localises to the acrosome inner membrane. The protein resides in the acrosome outer membrane. It is found in the nucleus. Its subcellular location is the cytoplasm. In terms of biological role, acrosomal membrane-anchored protein involved in the process of fertilization and in acrosome biogenesis. In Mus musculus (Mouse), this protein is Equatorin (Eqtn).